A 221-amino-acid polypeptide reads, in one-letter code: Protein-L-isoaspartate O-methyltransferase (221 aa).

S57 is a catalytic residue.

Belongs to the methyltransferase superfamily. L-isoaspartyl/D-aspartyl protein methyltransferase family.

The protein resides in the cytoplasm. The enzyme catalyses [protein]-L-isoaspartate + S-adenosyl-L-methionine = [protein]-L-isoaspartate alpha-methyl ester + S-adenosyl-L-homocysteine. Catalyzes the methyl esterification of L-isoaspartyl residues in peptides and proteins that result from spontaneous decomposition of normal L-aspartyl and L-asparaginyl residues. It plays a role in the repair and/or degradation of damaged proteins. The sequence is that of Protein-L-isoaspartate O-methyltransferase from Korarchaeum cryptofilum (strain OPF8).